The primary structure comprises 232 residues: Ribose-5-phosphate isomerase A (232 aa).

Residues 28–31 (TGST), 83–86 (DGAD), and 96–99 (KGGG) each bind substrate. Glu-105 serves as the catalytic Proton acceptor. Substrate is bound at residue Lys-123.

It belongs to the ribose 5-phosphate isomerase family. Homodimer.

The enzyme catalyses aldehydo-D-ribose 5-phosphate = D-ribulose 5-phosphate. It functions in the pathway carbohydrate degradation; pentose phosphate pathway; D-ribose 5-phosphate from D-ribulose 5-phosphate (non-oxidative stage): step 1/1. Catalyzes the reversible conversion of ribose-5-phosphate to ribulose 5-phosphate. This chain is Ribose-5-phosphate isomerase A, found in Rhodopseudomonas palustris (strain BisB5).